The sequence spans 224 residues: Pyridoxal 5'-phosphate synthase subunit PdxT (224 aa).

55–57 (GES) lines the L-glutamine pocket. C87 (nucleophile) is an active-site residue. Residues R113 and 142–143 (IR) contribute to the L-glutamine site. Active-site charge relay system residues include H178 and E180.

It belongs to the glutaminase PdxT/SNO family. In the presence of PdxS, forms a dodecamer of heterodimers. Only shows activity in the heterodimer.

The catalysed reaction is aldehydo-D-ribose 5-phosphate + D-glyceraldehyde 3-phosphate + L-glutamine = pyridoxal 5'-phosphate + L-glutamate + phosphate + 3 H2O + H(+). The enzyme catalyses L-glutamine + H2O = L-glutamate + NH4(+). Its pathway is cofactor biosynthesis; pyridoxal 5'-phosphate biosynthesis. Its function is as follows. Catalyzes the hydrolysis of glutamine to glutamate and ammonia as part of the biosynthesis of pyridoxal 5'-phosphate. The resulting ammonia molecule is channeled to the active site of PdxS. This is Pyridoxal 5'-phosphate synthase subunit PdxT from Syntrophus aciditrophicus (strain SB).